We begin with the raw amino-acid sequence, 156 residues long: Ribosomal RNA large subunit methyltransferase H (156 aa).

S-adenosyl-L-methionine contacts are provided by residues L73, G104, and 123–128 (LSSLTL).

This sequence belongs to the RNA methyltransferase RlmH family. Homodimer.

It localises to the cytoplasm. The catalysed reaction is pseudouridine(1915) in 23S rRNA + S-adenosyl-L-methionine = N(3)-methylpseudouridine(1915) in 23S rRNA + S-adenosyl-L-homocysteine + H(+). Its function is as follows. Specifically methylates the pseudouridine at position 1915 (m3Psi1915) in 23S rRNA. In Neisseria gonorrhoeae (strain ATCC 700825 / FA 1090), this protein is Ribosomal RNA large subunit methyltransferase H.